Consider the following 297-residue polypeptide: NAD(P)-dependent methylenetetrahydromethanopterin dehydrogenase (297 aa).

This sequence to M.extorquens MtdA. In terms of assembly, homohexamer.

It localises to the cytoplasm. The enzyme catalyses 5,10-methylenetetrahydromethanopterin + NAD(+) = 5,10-methenyl-5,6,7,8-tetrahydromethanopterin + NADH. The catalysed reaction is 5,10-methylenetetrahydromethanopterin + NADP(+) = 5,10-methenyl-5,6,7,8-tetrahydromethanopterin + NADPH. It functions in the pathway one-carbon metabolism; formaldehyde degradation; formate from formaldehyde (H(4)MPT route): step 2/5. Catalyzes the dehydrogenation of methylene-H(4)MPT. The protein is NAD(P)-dependent methylenetetrahydromethanopterin dehydrogenase (mtdB) of Methylorubrum extorquens (strain ATCC 14718 / DSM 1338 / JCM 2805 / NCIMB 9133 / AM1) (Methylobacterium extorquens).